The sequence spans 248 residues: Pyridoxine 5'-phosphate synthase (248 aa).

Asn-10 is a binding site for 3-amino-2-oxopropyl phosphate. 12-13 (DH) contacts 1-deoxy-D-xylulose 5-phosphate. Arg-21 contacts 3-amino-2-oxopropyl phosphate. His-46 serves as the catalytic Proton acceptor. 2 residues coordinate 1-deoxy-D-xylulose 5-phosphate: Arg-48 and His-53. Glu-73 acts as the Proton acceptor in catalysis. Thr-103 contacts 1-deoxy-D-xylulose 5-phosphate. The Proton donor role is filled by His-194. Residues Gly-195 and 216-217 (GH) contribute to the 3-amino-2-oxopropyl phosphate site.

The protein belongs to the PNP synthase family. In terms of assembly, homooctamer; tetramer of dimers.

Its subcellular location is the cytoplasm. The enzyme catalyses 3-amino-2-oxopropyl phosphate + 1-deoxy-D-xylulose 5-phosphate = pyridoxine 5'-phosphate + phosphate + 2 H2O + H(+). Its pathway is cofactor biosynthesis; pyridoxine 5'-phosphate biosynthesis; pyridoxine 5'-phosphate from D-erythrose 4-phosphate: step 5/5. Functionally, catalyzes the complicated ring closure reaction between the two acyclic compounds 1-deoxy-D-xylulose-5-phosphate (DXP) and 3-amino-2-oxopropyl phosphate (1-amino-acetone-3-phosphate or AAP) to form pyridoxine 5'-phosphate (PNP) and inorganic phosphate. The sequence is that of Pyridoxine 5'-phosphate synthase from Legionella pneumophila (strain Paris).